Reading from the N-terminus, the 208-residue chain is ATP-dependent Clp protease proteolytic subunit 1 (208 aa).

S108 acts as the Nucleophile in catalysis. H133 is a catalytic residue.

The protein belongs to the peptidase S14 family. Fourteen ClpP subunits assemble into 2 heptameric rings which stack back to back to give a disk-like structure with a central cavity, resembling the structure of eukaryotic proteasomes.

Its subcellular location is the cytoplasm. It carries out the reaction Hydrolysis of proteins to small peptides in the presence of ATP and magnesium. alpha-casein is the usual test substrate. In the absence of ATP, only oligopeptides shorter than five residues are hydrolyzed (such as succinyl-Leu-Tyr-|-NHMec, and Leu-Tyr-Leu-|-Tyr-Trp, in which cleavage of the -Tyr-|-Leu- and -Tyr-|-Trp bonds also occurs).. In terms of biological role, cleaves peptides in various proteins in a process that requires ATP hydrolysis. Has a chymotrypsin-like activity. Plays a major role in the degradation of misfolded proteins. The sequence is that of ATP-dependent Clp protease proteolytic subunit 1 from Corynebacterium glutamicum (strain ATCC 13032 / DSM 20300 / JCM 1318 / BCRC 11384 / CCUG 27702 / LMG 3730 / NBRC 12168 / NCIMB 10025 / NRRL B-2784 / 534).